The chain runs to 328 residues: Malate dehydrogenase (328 aa).

12-18 (GAAGQIA) contributes to the NAD(+) binding site. Substrate contacts are provided by Arg93 and Arg99. Residues Asn106, Gln113, and 130-132 (VGN) each bind NAD(+). Substrate is bound by residues Asn132 and Arg163. His188 serves as the catalytic Proton acceptor.

The protein belongs to the LDH/MDH superfamily. MDH type 2 family.

It catalyses the reaction (S)-malate + NAD(+) = oxaloacetate + NADH + H(+). Functionally, catalyzes the reversible oxidation of malate to oxaloacetate. The sequence is that of Malate dehydrogenase from Burkholderia cenocepacia (strain HI2424).